The chain runs to 127 residues: Glycine cleavage system H protein (127 aa).

Residues 22 to 104 enclose the Lipoyl-binding domain; it reads KVRIGITHFA…YEKAWMIVVE (83 aa). Lys-63 bears the N6-lipoyllysine mark.

This sequence belongs to the GcvH family. In terms of assembly, the glycine cleavage system is composed of four proteins: P, T, L and H. It depends on (R)-lipoate as a cofactor.

In terms of biological role, the glycine cleavage system catalyzes the degradation of glycine. The H protein shuttles the methylamine group of glycine from the P protein to the T protein. Its function is as follows. Is also involved in protein lipoylation via its role as an octanoyl/lipoyl carrier protein intermediate. The polypeptide is Glycine cleavage system H protein (Bacillus pumilus (strain SAFR-032)).